The primary structure comprises 376 residues: Lipoprotein p33 (376 aa).

The first 30 residues, 1–30 (MKIKKIKLLKALALTGAFGIVATVPVIVSS), serve as a signal peptide directing secretion. Cys31 is lipidated: N-palmitoyl cysteine. Cys31 carries S-diacylglycerol cysteine lipidation. The disordered stretch occupies residues 33–59 (STDNNGGTGDNNTGGGGSGTDQQQGTT). A compositionally biased stretch (gly residues) spans 38–51 (GGTGDNNTGGGGSG).

The protein belongs to the p35 lipoprotein family.

It is found in the cell membrane. The chain is Lipoprotein p33 from Malacoplasma penetrans (strain HF-2) (Mycoplasma penetrans).